Consider the following 330-residue polypeptide: DNA-directed RNA polymerase subunit alpha (330 aa).

The tract at residues 1-235 is alpha N-terminal domain (alpha-NTD); it reads MQGSVTEFLK…EQLEAFVDLR (235 aa). Positions 249 to 330 are alpha C-terminal domain (alpha-CTD); sequence FDPILLRPVD…WPPASIADNE (82 aa).

The protein belongs to the RNA polymerase alpha chain family. Homodimer. The RNAP catalytic core consists of 2 alpha, 1 beta, 1 beta' and 1 omega subunit. When a sigma factor is associated with the core the holoenzyme is formed, which can initiate transcription.

The enzyme catalyses RNA(n) + a ribonucleoside 5'-triphosphate = RNA(n+1) + diphosphate. Its function is as follows. DNA-dependent RNA polymerase catalyzes the transcription of DNA into RNA using the four ribonucleoside triphosphates as substrates. The sequence is that of DNA-directed RNA polymerase subunit alpha from Yersinia enterocolitica serotype O:8 / biotype 1B (strain NCTC 13174 / 8081).